The primary structure comprises 202 residues: Xanthine phosphoribosyltransferase (202 aa).

Leu20 and Asn27 together coordinate xanthine. Residue 128–132 (ASGGT) participates in 5-phospho-alpha-D-ribose 1-diphosphate binding. Residue Lys156 coordinates xanthine.

Belongs to the purine/pyrimidine phosphoribosyltransferase family. Xpt subfamily. Homodimer.

It localises to the cytoplasm. It catalyses the reaction XMP + diphosphate = xanthine + 5-phospho-alpha-D-ribose 1-diphosphate. It functions in the pathway purine metabolism; XMP biosynthesis via salvage pathway; XMP from xanthine: step 1/1. In terms of biological role, converts the preformed base xanthine, a product of nucleic acid breakdown, to xanthosine 5'-monophosphate (XMP), so it can be reused for RNA or DNA synthesis. This chain is Xanthine phosphoribosyltransferase, found in Deinococcus geothermalis (strain DSM 11300 / CIP 105573 / AG-3a).